Reading from the N-terminus, the 361-residue chain is Trans-2,3-enoyl-CoA reductase-like (361 aa).

2 positions are modified to phosphoserine: Ser33 and Ser35. 4 helical membrane-spanning segments follow: residues Val139–Phe159, Val181–Phe201, Leu215–His235, and Ile309–Ile329.

Belongs to the steroid 5-alpha reductase family. As to expression, expression is highest in the heart with very low to almost undetectable levels in brain, skeletal muscle, stomach, pancreas, liver, kidney, small intestine, and uterus.

Its subcellular location is the membrane. It is found in the endoplasmic reticulum. This is Trans-2,3-enoyl-CoA reductase-like (Tecrl) from Mus musculus (Mouse).